We begin with the raw amino-acid sequence, 652 residues long: DNA ligase (652 aa).

NAD(+) is bound by residues 29-33 (DQEYD), 78-79 (SL), and Glu107. Lys109 functions as the N6-AMP-lysine intermediate in the catalytic mechanism. Positions 130, 164, 278, and 302 each coordinate NAD(+). Zn(2+) is bound by residues Cys395, Cys398, Cys413, and Cys418. The BRCT domain maps to 577 to 652 (DTSAQLFGLT…VKDENWLLQL (76 aa)).

The protein belongs to the NAD-dependent DNA ligase family. LigA subfamily. Mg(2+) serves as cofactor. It depends on Mn(2+) as a cofactor.

It catalyses the reaction NAD(+) + (deoxyribonucleotide)n-3'-hydroxyl + 5'-phospho-(deoxyribonucleotide)m = (deoxyribonucleotide)n+m + AMP + beta-nicotinamide D-nucleotide.. Its function is as follows. DNA ligase that catalyzes the formation of phosphodiester linkages between 5'-phosphoryl and 3'-hydroxyl groups in double-stranded DNA using NAD as a coenzyme and as the energy source for the reaction. It is essential for DNA replication and repair of damaged DNA. The sequence is that of DNA ligase from Streptococcus uberis (strain ATCC BAA-854 / 0140J).